The primary structure comprises 120 residues: Immunoglobulin kappa variable 2-29 (120 aa).

A signal peptide spans 1–20 (MRLPAQLLGLLMLWIPGSSA). The tract at residues 21–43 (DIVMTQTPLSLSVTPGQPASISC) is framework-1. The Ig-like domain occupies 21 to 120 (DIVMTQTPLS…YYCMQGIHLP (100 aa)). Cys43 and Cys113 are disulfide-bonded. The tract at residues 44–59 (KSSQSLLHSDGKTYLY) is complementarity-determining-1. The segment at 60–74 (WYLQKPGQSPQLLIY) is framework-2. Positions 75 to 81 (EVSSRFS) are complementarity-determining-2. The framework-3 stretch occupies residues 82 to 113 (GVPDRFSGSGSGTDFTLKISRVEAEDVGVYYC). Positions 114–120 (MQGIHLP) are complementarity-determining-3.

In terms of assembly, immunoglobulins are composed of two identical heavy chains and two identical light chains; disulfide-linked.

It localises to the secreted. It is found in the cell membrane. In terms of biological role, v region of the variable domain of immunoglobulin light chains that participates in the antigen recognition. Immunoglobulins, also known as antibodies, are membrane-bound or secreted glycoproteins produced by B lymphocytes. In the recognition phase of humoral immunity, the membrane-bound immunoglobulins serve as receptors which, upon binding of a specific antigen, trigger the clonal expansion and differentiation of B lymphocytes into immunoglobulins-secreting plasma cells. Secreted immunoglobulins mediate the effector phase of humoral immunity, which results in the elimination of bound antigens. The antigen binding site is formed by the variable domain of one heavy chain, together with that of its associated light chain. Thus, each immunoglobulin has two antigen binding sites with remarkable affinity for a particular antigen. The variable domains are assembled by a process called V-(D)-J rearrangement and can then be subjected to somatic hypermutations which, after exposure to antigen and selection, allow affinity maturation for a particular antigen. This chain is Immunoglobulin kappa variable 2-29, found in Homo sapiens (Human).